Reading from the N-terminus, the 321-residue chain is MTFISQAPSVSISSAGPSDYFALLKPRVMSLVIFTALAGMLIAPDPVHPIVGFASLLAIAVGAGASGALNMWYDADIDAVMKRTAKRPIPLGRVMPNEALAFGLTLSFLSVFTLGIVANWLAAGFLAFTIFFYVVIYTMWLKRSTPQNIVIGGAAGAFPPMVGYAAATGHFSLSSFILFAIIFIWTPPHFWALALGRSEDYRQAGIPMMPNVKGAARTRLEILLYTLLLAPLGVAPWLLGFASFVYGMLSIALGAAMLFFAARVYIVQEGPSADRHAKALFGFSILYLFLLFAEIVVERLVPIVVAMGAWLTSGMFPGFFH.

10 consecutive transmembrane segments (helical) span residues 28–48 (VMSL…DPVH), 49–69 (PIVG…SGAL), 94–114 (VMPN…VFTL), 116–136 (IVAN…YVVI), 149–169 (IVIG…AATG), 176–196 (FILF…LALG), 222–242 (ILLY…LGFA), 247–267 (GMLS…VYIV), 277–297 (AKAL…EIVV), and 300–320 (LVPI…PGFF).

This sequence belongs to the UbiA prenyltransferase family. Protoheme IX farnesyltransferase subfamily.

The protein localises to the cell inner membrane. The enzyme catalyses heme b + (2E,6E)-farnesyl diphosphate + H2O = Fe(II)-heme o + diphosphate. It participates in porphyrin-containing compound metabolism; heme O biosynthesis; heme O from protoheme: step 1/1. Its function is as follows. Converts heme B (protoheme IX) to heme O by substitution of the vinyl group on carbon 2 of heme B porphyrin ring with a hydroxyethyl farnesyl side group. The protein is Protoheme IX farnesyltransferase of Beijerinckia indica subsp. indica (strain ATCC 9039 / DSM 1715 / NCIMB 8712).